A 389-amino-acid chain; its full sequence is Lipid-A-disaccharide synthase (389 aa).

The protein belongs to the LpxB family.

The catalysed reaction is a lipid X + a UDP-2-N,3-O-bis[(3R)-3-hydroxyacyl]-alpha-D-glucosamine = a lipid A disaccharide + UDP + H(+). Its pathway is bacterial outer membrane biogenesis; LPS lipid A biosynthesis. Its function is as follows. Condensation of UDP-2,3-diacylglucosamine and 2,3-diacylglucosamine-1-phosphate to form lipid A disaccharide, a precursor of lipid A, a phosphorylated glycolipid that anchors the lipopolysaccharide to the outer membrane of the cell. This chain is Lipid-A-disaccharide synthase, found in Verminephrobacter eiseniae (strain EF01-2).